Reading from the N-terminus, the 349-residue chain is Putative F-box/LRR-repeat protein At3g16555 (349 aa).

Residues 1–48 enclose the F-box domain; the sequence is MVLLPWELEEDILSRLPPRSLVQFRSVCKRWNALFDVKSFNKDQFARA. Residues 267–290 form an LRR repeat; it reads VVWISLLTLPPNNLPNLFIVCYGI.

This Arabidopsis thaliana (Mouse-ear cress) protein is Putative F-box/LRR-repeat protein At3g16555.